Consider the following 428-residue polypeptide: Dihydroorotase (428 aa).

Zn(2+) contacts are provided by His59 and His61. Substrate is bound by residues 61–63 (HLR) and Asn93. Positions 151, 178, and 231 each coordinate Zn(2+). Asn277 contributes to the substrate binding site. Position 304 (Asp304) interacts with Zn(2+). The active site involves Asp304. Substrate is bound by residues His308 and 322-323 (FG).

This sequence belongs to the metallo-dependent hydrolases superfamily. DHOase family. Class I DHOase subfamily. It depends on Zn(2+) as a cofactor.

The enzyme catalyses (S)-dihydroorotate + H2O = N-carbamoyl-L-aspartate + H(+). The protein operates within pyrimidine metabolism; UMP biosynthesis via de novo pathway; (S)-dihydroorotate from bicarbonate: step 3/3. Its function is as follows. Catalyzes the reversible cyclization of carbamoyl aspartate to dihydroorotate. The chain is Dihydroorotase from Bacillus pumilus (strain SAFR-032).